Consider the following 576-residue polypeptide: A-type ATP synthase subunit A (576 aa).

228–235 (GGFGTGKT) provides a ligand contact to ATP.

This sequence belongs to the ATPase alpha/beta chains family. As to quaternary structure, has multiple subunits with at least A(3), B(3), C, D, E, F, H, I and proteolipid K(x).

The protein localises to the cell membrane. It catalyses the reaction ATP + H2O + 4 H(+)(in) = ADP + phosphate + 5 H(+)(out). In terms of biological role, component of the A-type ATP synthase that produces ATP from ADP in the presence of a proton gradient across the membrane. The A chain is the catalytic subunit. The protein is A-type ATP synthase subunit A of Methanothrix thermoacetophila (strain DSM 6194 / JCM 14653 / NBRC 101360 / PT) (Methanosaeta thermophila).